We begin with the raw amino-acid sequence, 336 residues long: Dihydroorotate dehydrogenase (quinone) (336 aa).

Residues 62–66 and Thr-86 contribute to the FMN site; that span reads AGLDK. Lys-66 is a substrate binding site. Substrate is bound at residue 111-115; sequence NRMGF. FMN contacts are provided by Asn-139 and Asn-172. Residue Asn-172 participates in substrate binding. The active-site Nucleophile is the Ser-175. Substrate is bound at residue Asn-177. FMN contacts are provided by Lys-217 and Thr-245. 246–247 is a substrate binding site; it reads NT. FMN is bound by residues Gly-268, Gly-297, and 318–319; that span reads YS.

It belongs to the dihydroorotate dehydrogenase family. Type 2 subfamily. Monomer. Requires FMN as cofactor.

The protein localises to the cell membrane. The enzyme catalyses (S)-dihydroorotate + a quinone = orotate + a quinol. It participates in pyrimidine metabolism; UMP biosynthesis via de novo pathway; orotate from (S)-dihydroorotate (quinone route): step 1/1. In terms of biological role, catalyzes the conversion of dihydroorotate to orotate with quinone as electron acceptor. This chain is Dihydroorotate dehydrogenase (quinone), found in Shigella dysenteriae serotype 1 (strain Sd197).